The primary structure comprises 233 residues: Forkhead box protein L3 (233 aa).

The segment at residues 32-130 (RPAYSYIALI…ENGNYRRRRR (99 aa)) is a DNA-binding region (fork-head). Over residues 125 to 134 (YRRRRRRRGP) the composition is skewed to basic residues. Residues 125–198 (YRRRRRRRGP…PRDLKFSIDY (74 aa)) are disordered. Residues 175–184 (REPPASPAPP) show a composition bias toward pro residues. Residues 185–194 (GKEHPRDLKF) are compositionally biased toward basic and acidic residues.

It localises to the nucleus. Functionally, probable transcriptional regulator. This Homo sapiens (Human) protein is Forkhead box protein L3.